The following is a 361-amino-acid chain: uncharacterized protein (361 aa).

WD repeat units follow at residues 57-96 (RHKK…VSSK), 103-142 (KEIS…GIIH), 146-184 (DHID…KPIL), 187-229 (EQDE…DHTD), 237-275 (SHDF…YERI), and 280-318 (SSRS…GDES). Positions 311-361 (DQKEGDESSSSDNLDSDEDSSSDSEFSSPKKKKKVGNQGKKPLGTDFFDGL) are disordered.

It localises to the nucleus. Its subcellular location is the nucleolus. This is an uncharacterized protein from Schizosaccharomyces pombe (strain 972 / ATCC 24843) (Fission yeast).